Here is a 483-residue protein sequence, read N- to C-terminus: Deoxyribodipyrimidine photo-lyase (483 aa).

A Photolyase/cryptochrome alpha/beta domain is found at 2-136 (QKNLIWFRND…LVKGFHDNLL (135 aa)). Asn-109 and Glu-110 together coordinate (6R)-5,10-methylene-5,6,7,8-tetrahydrofolate. Tyr-225 provides a ligand contact to FAD. Arg-229 provides a ligand contact to DNA. 237 to 241 (TSMLS) provides a ligand contact to FAD. 2 interaction with DNA regions span residues 278 to 285 (QILWREFY) and 345 to 346 (NR). 376 to 378 (DGD) serves as a coordination point for FAD. Residue Gln-408 participates in DNA binding.

This sequence belongs to the DNA photolyase class-1 family. In terms of assembly, monomer. Requires FAD as cofactor. It depends on (6R)-5,10-methylene-5,6,7,8-tetrahydrofolate as a cofactor.

The catalysed reaction is cyclobutadipyrimidine (in DNA) = 2 pyrimidine residues (in DNA).. In terms of biological role, involved in repair of UV radiation-induced DNA damage. Catalyzes the light-dependent monomerization (300-600 nm) of cyclobutyl pyrimidine dimers (in cis-syn configuration), which are formed between adjacent bases on the same DNA strand upon exposure to ultraviolet radiation. This Buchnera aphidicola subsp. Acyrthosiphon pisum (strain APS) (Acyrthosiphon pisum symbiotic bacterium) protein is Deoxyribodipyrimidine photo-lyase (phrB).